The following is a 137-amino-acid chain: MLFVPRKTKHSKSFKGRISGNTKGGSELAFGQCGLKALEPCRLTSKQIESARRSISRSLRRVGKVWIRVFCHVPVSKKPVDVRMGKGKGSTEMWVCKVQPGRILFEIGGVSVELAREAFRKAQSKLPIKCSFVEEGF.

The protein belongs to the universal ribosomal protein uL16 family. Part of the 50S ribosomal subunit.

In terms of biological role, binds 23S rRNA and is also seen to make contacts with the A and possibly P site tRNAs. This chain is Large ribosomal subunit protein uL16, found in Anaplasma phagocytophilum (strain HZ).